A 295-amino-acid polypeptide reads, in one-letter code: uncharacterized protein (295 aa).

This is an uncharacterized protein from Acanthamoeba polyphaga (Amoeba).